The chain runs to 208 residues: Small ribosomal subunit protein uS4 (208 aa).

The S4 RNA-binding domain maps to 95–157 (RRIDNVVYRA…DRLKKLVRSN (63 aa)).

Belongs to the universal ribosomal protein uS4 family. Part of the 30S ribosomal subunit. Contacts protein S5. The interaction surface between S4 and S5 is involved in control of translational fidelity.

Its function is as follows. One of the primary rRNA binding proteins, it binds directly to 16S rRNA where it nucleates assembly of the body of the 30S subunit. Functionally, with S5 and S12 plays an important role in translational accuracy. This is Small ribosomal subunit protein uS4 from Borrelia turicatae (strain 91E135).